The chain runs to 130 residues: Ribosome-binding factor A (130 aa).

This sequence belongs to the RbfA family. In terms of assembly, monomer. Binds 30S ribosomal subunits, but not 50S ribosomal subunits or 70S ribosomes.

It is found in the cytoplasm. Its function is as follows. One of several proteins that assist in the late maturation steps of the functional core of the 30S ribosomal subunit. Associates with free 30S ribosomal subunits (but not with 30S subunits that are part of 70S ribosomes or polysomes). Required for efficient processing of 16S rRNA. May interact with the 5'-terminal helix region of 16S rRNA. The polypeptide is Ribosome-binding factor A (Pseudomonas aeruginosa (strain LESB58)).